The following is an 871-amino-acid chain: MAKIRIHEIAKELGYDSKEIIEKANELGLGIKTASNAVEPEIAAAIYEYIQTREIPEAFKKNIKTPTAKKPKKENIKEQEKLNESEKKEPKKEEKLKQEVKKEELKIEKENAKEEEKQEIIDAHKPQSLASATLAKRRGLVIVKKKKDEEEIQVKKEEVKNSNDISINNEERLSLKTMFSNADESLKKKKKEKKSFVASKKESTEKMNFLDEHDFGDISLDDEDEVVLPDFSVKEQEKPQNINKKQPNFIRQAVGNSAGFGLEGGIQRRSRKKPSKKIEKKEVEEVGSVAISKEIRVYEFADKIGKSTSEVISKLFMLGMMTTKNDFLDEDAIEILAAEFGIEINIINEADEFDYVKDYEEETDEKDLVTRAPVITIMGHVDHGKTSLLDYIRKSRVASGEAGGITQHVGAYMVEKNGRKITFIDTPGHEAFTAMRARGASITDIVIIVVAADDGVKPQTKEAINHAKAAGVPIIIAINKMDKEAANPDMVKTQLAEMEIMPVEWGGSYEFVGVSAKTGMGIEDLLEIVLLQADILELKANPKSFAKASIIESSVQKGRGAVATIIVQNGTLTIGSTVVAGEAYGKVRAMSDDQGKALKEIKPGECGVIVGLSEVADAGEILIAVKTDKEAREYANKRHEYNRQKELSKSTKVSIDELGAKIKEGNLKALPVILKADVQGSLEALKASLEKLRNDEIKVNIIHSGVGGITQSDIELASASENSIVLGFNIRPTGEVKERAKDKGVEIKTYNVIYNLLDDVKALLGGMMSPIISEEQLGQAEIRQVINVPKIGQIAGCMVTEGVINRGAKIRLIRDGVVVYEGNVSSLKRFKDDAKEVAKGYECGVGIEGCDDMRVGDYIESYKEVEEQASL.

Disordered regions lie at residues 60 to 101 (KKNI…QEVK) and 184 to 203 (ESLKKKKKEKKSFVASKKES). Positions 61–72 (KNIKTPTAKKPK) are enriched in basic residues. A compositionally biased stretch (basic and acidic residues) spans 73-101 (KENIKEQEKLNESEKKEPKKEEKLKQEVK). The tr-type G domain maps to 370–537 (TRAPVITIMG…IVLLQADILE (168 aa)). A G1 region spans residues 379-386 (GHVDHGKT). 379-386 (GHVDHGKT) is a GTP binding site. Residues 404–408 (GITQH) are G2. The tract at residues 425–428 (DTPG) is G3. GTP is bound by residues 425 to 429 (DTPGH) and 479 to 482 (NKMD). Positions 479–482 (NKMD) are G4. The G5 stretch occupies residues 515–517 (SAK).

The protein belongs to the TRAFAC class translation factor GTPase superfamily. Classic translation factor GTPase family. IF-2 subfamily.

Its subcellular location is the cytoplasm. Its function is as follows. One of the essential components for the initiation of protein synthesis. Protects formylmethionyl-tRNA from spontaneous hydrolysis and promotes its binding to the 30S ribosomal subunits. Also involved in the hydrolysis of GTP during the formation of the 70S ribosomal complex. The sequence is that of Translation initiation factor IF-2 from Campylobacter jejuni (strain RM1221).